The sequence spans 361 residues: 3-galactosyl-N-acetylglucosaminide 4-alpha-L-fucosyltransferase FUT3 (361 aa).

Residues 1–15 are Cytoplasmic-facing; it reads MDPLGAAKPQWPWRR. A helical; Signal-anchor for type II membrane protein transmembrane segment spans residues 16-34; the sequence is CLAALLFQLLVAVCFFSYL. Residues 35 to 361 are Lumenal-facing; sequence RVSRDDATGS…TVRSIAAWFT (327 aa). Residues 39–58 form a disordered region; it reads DDATGSPRAPSGSSRQDTTP. N-linked (GlcNAc...) asparagine glycosylation is found at asparagine 154 and asparagine 185.

Belongs to the glycosyltransferase 10 family. Glycosylated. Highly expressed in stomach, colon, small intestine, lung and kidney and to a lesser extent in salivary gland, bladder, uterus and liver.

The protein resides in the golgi apparatus. It localises to the golgi stack membrane. It carries out the reaction a beta-D-galactosyl-(1-&gt;3)-N-acetyl-beta-D-glucosaminyl derivative + GDP-beta-L-fucose = a beta-D-galactosyl-(1-&gt;3)-[alpha-L-fucosyl-(1-&gt;4)]-N-acetyl-beta-D-glucosaminyl derivative + GDP + H(+). The enzyme catalyses an N-acetyl-alpha-neuraminyl-(2-&gt;3)-beta-D-galactosyl-(1-&gt;4)-N-acetyl-beta-D-glucosaminyl derivative + GDP-beta-L-fucose = an alpha-Neu5Ac-(2-&gt;3)-beta-D-Gal-(1-&gt;4)-[alpha-L-Fuc-(1-&gt;3)]-beta-D-GlcNAc derivative + GDP + H(+). The catalysed reaction is a beta-D-galactosyl-(1-&gt;4)-N-acetyl-beta-D-glucosaminyl derivative + GDP-beta-L-fucose = a beta-D-galactosyl-(1-&gt;4)-[alpha-L-fucosyl-(1-&gt;3)]-N-acetyl-beta-D-glucosaminyl derivative + GDP + H(+). It catalyses the reaction an alpha-Neu5Ac-(2-&gt;3)-beta-D-Gal-(1-&gt;4)-beta-D-GlcNAc-(1-&gt;3)-beta-D-Gal-(1-&gt;4)-[alpha-L-Fuc-(1-&gt;3)]-beta-D-GlcNAc derivative + GDP-beta-L-fucose = an alpha-Neu5Ac-(2-&gt;3)-beta-D-Gal-(1-&gt;4)-[alpha-L-Fuc-(1-&gt;3)]-beta-D-GlcNAc-(1-&gt;3)-beta-D-Gal-(1-&gt;4)-[alpha-L-Fuc-(1-&gt;3)]-beta-D-GlcNAc derivative + GDP + H(+). It carries out the reaction Lc4Cer + GDP-beta-L-fucose = a lactoside III(4)-a-Fuc-Lc4Cer + GDP + H(+). The enzyme catalyses a beta-D-Gal-(1-&gt;3)-beta-D-GlcNAc-(1-&gt;3)-beta-D-Gal-(1-&gt;4)-beta-D-Glc-(1&lt;-&gt;1')-Cer(d18:1(4E)) + GDP-beta-L-fucose = a III(4)-a-Fuc-Lc4Cer(d18:1(4E)) + GDP + H(+). The catalysed reaction is N-acetyl-alpha-neuraminosyl-(2-&gt;3)-beta-D-galactosyl-(1-&gt;3)-[N-acetyl-alpha-neuraminosyl-(2-&gt;6)]-N-acetyl-beta-D-glucosaminyl-(1-&gt;3)-beta-D-galactosyl-(1-&gt;4)-beta-D-glucosyl-(1&lt;-&gt;1')-N-acyl-sphing-4-enine + GDP-beta-L-fucose = N-acetyl-alpha-neuraminosyl-(2-&gt;3)-beta-D-galactosyl-(1-&gt;3)-alpha-L-fucosyl-(1-&gt;4)-[N-acetyl-alpha-neuraminosyl-(2-&gt;6)-N-acetyl-beta-D-glucosaminyl-(1-&gt;3)]-beta-D-galactosyl-(1-&gt;4)-beta-D-glucosyl-(1&lt;-&gt;1')-N-acyl-sphing-4-enine + GDP + H(+). It catalyses the reaction N-acetyl-alpha-neuraminosyl-(2-&gt;3)-beta-D-galactosyl-(1-&gt;3)-N-acetyl-beta-D-glucosaminyl-(1-&gt;3)-beta-D-galactosyl-(1-&gt;4)-beta-D-glucosyl-(1&lt;-&gt;1')-N-acyl-sphing-4-enine + GDP-beta-L-fucose = N-acetyl-alpha-neuraminosyl-(2-&gt;3)-beta-D-galactosyl-(1-&gt;3)-alpha-L-fucosyl-(1-&gt;4)-[N-acetyl-beta-D-glucosaminyl-(1-&gt;3)]-beta-D-galactosyl-(1-&gt;4)-beta-D-glucosyl-(1&lt;-&gt;1')-N-acyl-sphing-4-enine + GDP + H(+). It carries out the reaction beta-D-galactosyl-(1-&gt;3)-N-acetyl-D-glucosamine + GDP-beta-L-fucose = beta-D-galactosyl-(1-&gt;3)-[alpha-L-fucosyl-(1-&gt;4)]-N-acetyl-D-glucosamine + GDP + H(+). The enzyme catalyses alpha-L-Fuc-(1-&gt;2)-beta-D-Gal-(1-&gt;3)-D-GlcNAc + GDP-beta-L-fucose = alpha-L-Fuc-(1-&gt;2)-beta-D-Gal-(1-&gt;3)-[alpha-L-Fuc-(1-&gt;4)]-D-GlcNAc + GDP + H(+). The catalysed reaction is alpha-L-Fuc-(1-&gt;2)-beta-D-Gal-(1-&gt;4)-D-GlcNAc + GDP-beta-L-fucose = alpha-L-Fuc-(1-&gt;2)-beta-D-Gal-(1-&gt;4)-[alpha-L-Fuc-(1-&gt;3)]-D-GlcNAc + GDP + H(+). It catalyses the reaction beta-D-galactosyl-(1-&gt;4)-N-acetyl-D-glucosamine + GDP-beta-L-fucose = beta-D-galactosyl-(1-&gt;4)-[alpha-L-fucosyl-(1-&gt;3)]-N-acetyl-D-glucosamine + GDP + H(+). It carries out the reaction lactose + GDP-beta-L-fucose = beta-D-galactosyl-(1-&gt;4)-[alpha-L-fucosyl-(1-&gt;3)]-D-glucose + GDP + H(+). The enzyme catalyses an alpha-Neu5Ac-(2-&gt;3)-beta-D-Gal-(1-&gt;3)-D-GlcNAc derivative + GDP-beta-L-fucose = an alpha-Neu5Ac-(2-&gt;3)-beta-D-Gal-(1-&gt;3)-[alpha-L-Fuc-(1-&gt;4)]-beta-D-GlcNAc derivative + GDP + H(+). The protein operates within protein modification; protein glycosylation. Its function is as follows. Catalyzes the transfer of L-fucose, from a guanosine diphosphate-beta-L-fucose, to both the subterminal N-acetyl glucosamine (GlcNAc) of type 1 chain (beta-D-Gal-(1-&gt;3)-beta-D-GlcNAc) glycolipids and oligosaccharides via an alpha(1,4) linkage, and the subterminal glucose (Glc) or GlcNAc of type 2 chain (beta-D-Gal-(1-&gt;4)-beta-D-GlcNAc) oligosaccharides via an alpha(1,3) linkage, independently of the presence of terminal alpha-L-fucosyl-(1,2) moieties on the terminal galactose of these acceptors. Through its catalytic activity, participates in the synthesis of antigens of the Lewis blood group system, i.e. Lewis a (Le(a)), lewis b (Le(b)), Lewis x/SSEA-1 (Le(x)) and lewis y (Le(y)) antigens. Also catalyzes the transfer of L-fucose to subterminal GlcNAc of sialyl- and disialyl-lactotetraosylceramide to produce sialyl Lewis a (sLe(a)) and disialyl Lewis a via an alpha(1,4) linkage and therefore may regulate cell surface sLe(a) expression and consequently regulates adhesive properties to E-selectin, cell proliferation and migration. Catalyzes the transfer of an L-fucose to 3'-sialyl-N-acetyllactosamine by an alpha(1,3) linkage, which allows the formation of sialyl-Lewis x structure and therefore may regulate the sialyl-Lewis x surface antigen expression and consequently adhesive properties to E-selectin. Prefers type 1 chain over type 2 acceptors. Type 1 tetrasaccharide is a better acceptor than type 1 disaccharide suggesting that a beta anomeric configuration of GlcNAc in the substrate is preferred. Lewis-positive (Le(+)) individuals have an active enzyme while Lewis-negative (Le(-)) individuals have an inactive enzyme. The polypeptide is 3-galactosyl-N-acetylglucosaminide 4-alpha-L-fucosyltransferase FUT3 (Homo sapiens (Human)).